The sequence spans 347 residues: 3',5'-bisphosphate nucleotidase 2 (347 aa).

The active-site Proton acceptor is Asp-46. Mg(2+)-binding residues include Glu-71, Asp-134, Ile-136, and Asp-137. Thr-139 serves as the catalytic Proton acceptor. Positions 139, 255, 258, 272, and 284 each coordinate adenosine 3',5'-bisphosphate. Ser-255, Lys-258, Arg-272, and Asp-284 together coordinate AMP. Residue Asp-284 coordinates Mg(2+).

The protein belongs to the inositol monophosphatase superfamily. Requires Mg(2+) as cofactor. As to expression, very low expression in roots, leaves, stems, flowers and siliques.

It catalyses the reaction adenosine 3',5'-bisphosphate + H2O = AMP + phosphate. The enzyme catalyses 3'-phosphoadenylyl sulfate + H2O = adenosine 5'-phosphosulfate + phosphate. The catalysed reaction is 1D-myo-inositol 1,4-bisphosphate + H2O = 1D-myo-inositol 4-phosphate + phosphate. It functions in the pathway signal transduction; phosphatidylinositol signaling pathway. With respect to regulation, inhibited by Li(+) (IC(50)=10 mM), Na(+) (IC(50)=200 mM) and Ca(2+) (IC(50)=0.03 mM). Its function is as follows. Phosphatase that converts adenosine 3'-phosphate 5'-phosphosulfate (PAPS) to adenosine 5'-phosphosulfate (APS) and 3'-phosphoadenosine 5'-phosphate (3'-PAP) to AMP. May regulate the flux of sulfur in the sulfur-activation pathway by converting PAPS to APS. Prevents both the toxicity of PAP on RNA processing enzymes as well as the product inhibition by PAP of sulfate conjugation. Is also able to hydrolyze inositol 1,4-bisphosphate. This Arabidopsis thaliana (Mouse-ear cress) protein is 3',5'-bisphosphate nucleotidase 2.